The sequence spans 943 residues: Tyrosine-protein kinase transmembrane receptor ROR2 (943 aa).

Residues 1–33 (MARGSALPRRPLLCIPAVWAAAALLLSVSRTSG) form the signal peptide. Residues 34–403 (EVEVLDPNDP…CSPRDSSKMG (370 aa)) are Extracellular-facing. Positions 55–145 (PTLKGYFLNF…VATNGMKTIT (91 aa)) constitute an Ig-like C2-type domain. N-linked (GlcNAc...) asparagine glycosylation occurs at N70. 9 cysteine pairs are disulfide-bonded: C83-C135, C174-C239, C182-C232, C223-C264, C252-C300, C256-C286, C316-C394, C337-C377, and C365-C389. An FZ domain is found at 169–303 (HEDGFCQPYR…SPDAANCMRI (135 aa)). N-linked (GlcNAc...) asparagine glycosylation is present at N188. A Kringle domain is found at 316-394 (CYNGSGMDYR…RMELCDVPSC (79 aa)). N318 carries an N-linked (GlcNAc...) asparagine glycan. The chain crosses the membrane as a helical span at residues 404 to 424 (ILYILVPSIAIPLVIACLFFL). At 425–943 (VCMCRNKQKA…VDEAQVQLEA (519 aa)) the chain is on the cytoplasmic side. Sulfoserine; partial occurs at positions 469 and 471. The Protein kinase domain occupies 473–746 (VRFMEELGED…PRFKDIHSRL (274 aa)). Residues 479-487 (LGEDRFGKV) and K507 each bind ATP. The active-site Proton acceptor is D615. Y646 bears the Phosphotyrosine; by autocatalysis mark. Disordered stretches follow at residues 757-796 (SSAQTSGASNTTQTSSLSTSPVSNVSNARYVGPKQKAPPF) and 850-931 (QVPP…DCDT). 2 stretches are compositionally biased toward low complexity: residues 765-791 (SNTTQTSSLSTSPVSNVSNARYVGPKQ) and 857-872 (PKPSSHHSGSGSTSTG). The residue at position 785 (R785) is an Asymmetric dimethylarginine. The span at 873–883 (YVTTAPSNTSM) shows a compositional bias: polar residues.

This sequence belongs to the protein kinase superfamily. Tyr protein kinase family. ROR subfamily. Homodimer; promotes osteogenesis. Binds YWHAB. Interacts with WTIP. Interacts with ROR2. Requires Mg(2+) as cofactor.

It is found in the cell membrane. It catalyses the reaction L-tyrosyl-[protein] + ATP = O-phospho-L-tyrosyl-[protein] + ADP + H(+). Its function is as follows. Tyrosine-protein kinase receptor which may be involved in the early formation of the chondrocytes. It seems to be required for cartilage and growth plate development. Phosphorylates YWHAB, leading to induction of osteogenesis and bone formation. In contrast, has also been shown to have very little tyrosine kinase activity in vitro. May act as a receptor for wnt ligand WNT5A which may result in the inhibition of WNT3A-mediated signaling. This chain is Tyrosine-protein kinase transmembrane receptor ROR2 (ROR2), found in Homo sapiens (Human).